The chain runs to 888 residues: MDRISAYAAYGLAPKKTSKRSTMKIAKHFSKKNAKKTKEAMAAKKEARKAAAKAALREVRKLERKAAADKAAKIAADKAADKAAAKAAAKAAKKAAKREKNIAKKQPEKSAAGVTENVQKQLENGQENNGTLINLSNGKQHQKPKAAKMSSSNGSFSGIDSDFLNSSDFGSTEDSFMSGSGDSFDYSNNSDFDFDSDGDSNDFDDSDAAASSCASCEYFDMDSNMVVGQESDTNGNSYMHNGTTQSEDQFTEEYTLSSIFNSTSSSGANPIKVEPRKAAKRNEPFDLNNNKNKPTAAKQPKMSLKQEQAQVGKQRADPAPSCPLPPRPSKTMIKSCPLPPKAPAAKPVPNKCRLSSRESLTKTGAKSCRLSSAPADKMANKMAAPSRKSSSKNKNNDNNNIDTNNKKDANNKKDANNNKDINNKKDANNNKDTNNNKDNNNKNKLSSNVSQLVTGNEKQRGPVHLENSIEEGKRMLNWLLNPITSETFFEQYWERNACQVKRKQPNYFTQLISFQMIDEMLIENQLEFTTNIDVTTYKKGVRQTLNPVGRAMSPAIWGYYGDGCSIRILNPSTYLPKLRQLCSTMQEFFHCLVGANVYLTPPNSQGFAPHYDDIEAFVIQVEGRKRWRLYAPPHQSDVLARTSSGNYKQEELGQPLFDAVLEAGDILYFPRGTVHQAVTEPKQHSLHITLSVYQQQAYANLLEVLMPSVLERAIKHHLSLRRGLPLHIWQHVGLAKGGQQSEQRDQLMNSTKQLVQRYLVPTEAQIDAAVDQLAKRFQHEALPPYIKPEESMRTTKVRLLRRQHPAPGGRRQQLRVYYYVDNALEYCKNEPNYMEIQPTEAPAVEALMTTYPAYLKVGKLPLRSADRRIEVATALWERGLLMTEKPFK.

3 disordered regions span residues 83-157 (AAAK…GSFS), 187-208 (SNNSDFDFDSDGDSNDFDDSDA), and 261-446 (NSTS…NKLS). Basic and acidic residues predominate over residues 98–108 (REKNIAKKQPE). A compositionally biased stretch (polar residues) spans 116–139 (ENVQKQLENGQENNGTLINLSNGK). The segment covering 192-207 (FDFDSDGDSNDFDDSD) has biased composition (acidic residues). Residues 273–284 (VEPRKAAKRNEP) show a composition bias toward basic and acidic residues. Low complexity predominate over residues 392–403 (KNKNNDNNNIDT). Over residues 404-429 (NNKKDANNKKDANNNKDINNKKDANN) the composition is skewed to basic and acidic residues. The span at 430 to 444 (NKDTNNNKDNNNKNK) shows a compositional bias: low complexity. The region spanning 564-709 (CSIRILNPST…NLLEVLMPSV (146 aa)) is the JmjC domain. Positions 610, 612, and 675 each coordinate Fe cation.

Belongs to the ROX family. NO66 subfamily. The cofactor is Fe(2+).

The protein localises to the nucleus. It catalyses the reaction N(6),N(6)-dimethyl-L-lysyl(36)-[histone H3] + 2 2-oxoglutarate + 2 O2 = L-lysyl(36)-[histone H3] + 2 formaldehyde + 2 succinate + 2 CO2. Functionally, oxygenase that can act as both a histone lysine demethylase and a ribosomal histidine hydroxylase. Specifically demethylates 'Lys-4' (H3K4me) and 'Lys-36' (H3K36me) of histone H3, thereby playing a central role in histone code. The polypeptide is Bifunctional lysine-specific demethylase and histidyl-hydroxylase NO66 (Drosophila mojavensis (Fruit fly)).